Reading from the N-terminus, the 176-residue chain is Ribosome rescue factor SmrB (176 aa).

A Smr domain is found at 98-173 (LDLHGLNQYQ…NDAAIMVIIE (76 aa)).

The protein belongs to the SmrB family. Associates with collided ribosomes, but not with correctly translating polysomes.

Functionally, acts as a ribosome collision sensor. Detects stalled/collided disomes (pairs of ribosomes where the leading ribosome is stalled and a second ribosome has collided with it) and endonucleolytically cleaves mRNA at the 5' boundary of the stalled ribosome. Stalled/collided disomes form a new interface (primarily via the 30S subunits) that binds SmrB. Cleaved mRNA becomes available for tmRNA ligation, leading to ribosomal subunit dissociation and rescue of stalled ribosomes. The protein is Ribosome rescue factor SmrB of Buchnera aphidicola subsp. Schizaphis graminum (strain Sg).